The primary structure comprises 445 residues: uncharacterized protein (445 aa).

Transmembrane regions (helical) follow at residues 16 to 36, 52 to 72, 98 to 118, 168 to 188, 219 to 239, 243 to 263, 283 to 303, and 366 to 386; these read IVSLGVTASSFLFINGVAFLI, LLASMPSWGLVVTMFAWGYLL, VHSLLWIGVFLFLGGMAAGGC, GLMFPAVVCTLAAVASVLGIV, ASALLMMPQTVTVTFMLVWLI, GWSVAQAGVLVTISQLLGALG, LIAAAAAATLFLLAAVDNEGS, and AAYPTAWALCGVFPLAAVPLV. Positions 417–445 are disordered; that stretch reads AWPNGPRRPGPPGQPRRVRQGGTAITPPT.

Belongs to the major facilitator superfamily.

The protein localises to the cell membrane. This is an uncharacterized protein from Mycobacterium tuberculosis (strain CDC 1551 / Oshkosh).